The primary structure comprises 889 residues: Alanine--tRNA ligase (889 aa).

4 residues coordinate Zn(2+): histidine 564, histidine 568, cysteine 677, and histidine 681.

This sequence belongs to the class-II aminoacyl-tRNA synthetase family. Zn(2+) is required as a cofactor.

The protein localises to the cytoplasm. The catalysed reaction is tRNA(Ala) + L-alanine + ATP = L-alanyl-tRNA(Ala) + AMP + diphosphate. Catalyzes the attachment of alanine to tRNA(Ala) in a two-step reaction: alanine is first activated by ATP to form Ala-AMP and then transferred to the acceptor end of tRNA(Ala). Also edits incorrectly charged Ser-tRNA(Ala) and Gly-tRNA(Ala) via its editing domain. The chain is Alanine--tRNA ligase from Rhodopseudomonas palustris (strain ATCC BAA-98 / CGA009).